Here is an 899-residue protein sequence, read N- to C-terminus: Translation initiation factor IF-2 (899 aa).

Disordered stretches follow at residues 94–167 (TFTK…VVVK) and 259–309 (FNQE…HGFE). Positions 107–121 (AKARQETEERTRPQE) are enriched in basic and acidic residues. Residues 147–164 (RAAQQKETAKTTSTTTEV) are compositionally biased toward low complexity. The 170-residue stretch at 399-568 (TRPPVVTIMG…LIQSELMELK (170 aa)) folds into the tr-type G domain. The G1 stretch occupies residues 408-415 (GHVDHGKT). GTP is bound at residue 408–415 (GHVDHGKT). Residues 433–437 (GITQH) are G2. Positions 454–457 (DTPG) are G3. GTP contacts are provided by residues 454–458 (DTPGH) and 508–511 (NKMD). The tract at residues 508–511 (NKMD) is G4. Positions 544–546 (SAH) are G5.

The protein belongs to the TRAFAC class translation factor GTPase superfamily. Classic translation factor GTPase family. IF-2 subfamily.

Its subcellular location is the cytoplasm. Its function is as follows. One of the essential components for the initiation of protein synthesis. Protects formylmethionyl-tRNA from spontaneous hydrolysis and promotes its binding to the 30S ribosomal subunits. Also involved in the hydrolysis of GTP during the formation of the 70S ribosomal complex. The protein is Translation initiation factor IF-2 of Acinetobacter baylyi (strain ATCC 33305 / BD413 / ADP1).